A 564-amino-acid chain; its full sequence is Probable cysteine--tRNA ligase, mitochondrial (564 aa).

A Zn(2+)-binding site is contributed by Cys-78. Residue Gly-79 participates in L-cysteine binding. The 'HIGH' region signature appears at 80-90; sequence PTVYDHAHLGH. L-cysteine is bound at residue Thr-119. Positions 124–127 match the 'KIIK' region motif; sequence KIIK. The Zn(2+) site is built by Cys-257, His-282, and Glu-286. His-282 lines the L-cysteine pocket. Positions 317–321 match the 'KMSKS' region motif; sequence KMSKS. Lys-320 provides a ligand contact to ATP.

The protein belongs to the class-I aminoacyl-tRNA synthetase family. Zn(2+) is required as a cofactor.

Its subcellular location is the mitochondrion. It catalyses the reaction tRNA(Cys) + L-cysteine + ATP = L-cysteinyl-tRNA(Cys) + AMP + diphosphate. The enzyme catalyses 2 L-cysteine = S-sulfanyl-L-cysteine + L-alanine. It carries out the reaction S-sulfanyl-L-cysteine + L-cysteine = S-disulfanyl-L-cysteine + L-alanine. The catalysed reaction is S-sulfanyl-L-cysteine + tRNA(Cys) + ATP = (S)-sulfanyl-L-cysteinyl-tRNA(Cys) + AMP + diphosphate. It catalyses the reaction S-disulfanyl-L-cysteine + tRNA(Cys) + ATP = (S)-disulfanyl-L-cysteinyl-tRNA(Cys) + AMP + diphosphate. In terms of biological role, mitochondrial cysteine-specific aminoacyl-tRNA synthetase that catalyzes the ATP-dependent ligation of cysteine to tRNA(Cys). Functionally, in addition to its role as an aminoacyl-tRNA synthetase, has also cysteine persulfide synthase activity. Produces reactive persulfide species such as cysteine persulfide (CysSSH) from substrate cysteine and mediate direct incorporation of CysSSH into proteins during translations, resulting in protein persulfides and polysulfides. CysSSHs behave as potent antioxidants and cellular protectants. This Homo sapiens (Human) protein is Probable cysteine--tRNA ligase, mitochondrial.